A 151-amino-acid chain; its full sequence is D-aminoacyl-tRNA deacylase (151 aa).

Residues 137–138 (GP) carry the Gly-cisPro motif, important for rejection of L-amino acids motif.

This sequence belongs to the DTD family. Homodimer.

It is found in the cytoplasm. It carries out the reaction glycyl-tRNA(Ala) + H2O = tRNA(Ala) + glycine + H(+). The enzyme catalyses a D-aminoacyl-tRNA + H2O = a tRNA + a D-alpha-amino acid + H(+). Its function is as follows. An aminoacyl-tRNA editing enzyme that deacylates mischarged D-aminoacyl-tRNAs. Also deacylates mischarged glycyl-tRNA(Ala), protecting cells against glycine mischarging by AlaRS. Acts via tRNA-based rather than protein-based catalysis; rejects L-amino acids rather than detecting D-amino acids in the active site. By recycling D-aminoacyl-tRNA to D-amino acids and free tRNA molecules, this enzyme counteracts the toxicity associated with the formation of D-aminoacyl-tRNA entities in vivo and helps enforce protein L-homochirality. This is D-aminoacyl-tRNA deacylase from Listeria monocytogenes serotype 4a (strain HCC23).